The primary structure comprises 210 residues: MADFLARDYRSQGEAAHEMLPTFLIGKILRERIVDSIYWKEQCFGLNACSLVDRAVRLEYIGGQYGNQRPTEFICLLYKLLQIAPEKEIIQQYLSIPEFKYLRALAAFYVRLTWDDVEVHQTLEPLLRDYRKLRIRTNSEIRLTYLDEVVDDLLNAEVVCDISLPPLRSRLQLEDLDLLEPLSSSSDEEDDDEEQISKLESNEGAVDRNI.

The segment at 181 to 210 (PLSSSSDEEDDDEEQISKLESNEGAVDRNI) is disordered. Residues 195–210 (QISKLESNEGAVDRNI) are compositionally biased toward basic and acidic residues.

It belongs to the PRP38 family. In terms of assembly, component of the 25S U4/U6.U5 tri-snRNP particle, a subcomplex of the spliceosome.

The protein resides in the nucleus. Its function is as follows. Required for pre-mRNA splicing and maintenance of stable U6 small nuclear RNA levels. Implicated in the formation of stable and biologically active snRNP structures. As part of the U4/U6.U5 tri-snRNP particle, dispensible for spliceosome assembly, but required for conformational changes, which result in U4 snRNA release and the subsequent catalytic activation of the spliceosome. This chain is Pre-mRNA-splicing factor 38, found in Schizosaccharomyces pombe (strain 972 / ATCC 24843) (Fission yeast).